Here is a 648-residue protein sequence, read N- to C-terminus: Bifunctional protein TilS/HprT (648 aa).

29–34 (SGGPDS) contributes to the ATP binding site. Aspartate 627 is a binding site for Mg(2+).

In the N-terminal section; belongs to the tRNA(Ile)-lysidine synthase family. The protein in the C-terminal section; belongs to the purine/pyrimidine phosphoribosyltransferase family. Mg(2+) is required as a cofactor.

It localises to the cytoplasm. The enzyme catalyses IMP + diphosphate = hypoxanthine + 5-phospho-alpha-D-ribose 1-diphosphate. It catalyses the reaction GMP + diphosphate = guanine + 5-phospho-alpha-D-ribose 1-diphosphate. It carries out the reaction cytidine(34) in tRNA(Ile2) + L-lysine + ATP = lysidine(34) in tRNA(Ile2) + AMP + diphosphate + H(+). Its function is as follows. Ligates lysine onto the cytidine present at position 34 of the AUA codon-specific tRNA(Ile) that contains the anticodon CAU, in an ATP-dependent manner. Cytidine is converted to lysidine, thus changing the amino acid specificity of the tRNA from methionine to isoleucine. The protein is Bifunctional protein TilS/HprT (tilS/hprT) of Listeria monocytogenes serovar 1/2a (strain ATCC BAA-679 / EGD-e).